The primary structure comprises 381 residues: Selenoprotein P (381 aa).

An N-terminal signal peptide occupies residues 1–19 (MWRSLGLALALCLLPLGGT). Residue asparagine 46 is glycosylated (N-linked (GlcNAc...) asparagine). Selenocysteine 59 is a non-standard amino acid (selenocysteine). N-linked (GlcNAc...) asparagine glycosylation is found at asparagine 83, asparagine 119, and asparagine 128. The tract at residues 202-268 (SPHYHHEHHH…ENRDMPGSED (67 aa)) is disordered. Basic residues predominate over residues 204–217 (HYHHEHHHNHRHQH). Residues 218–229 (LGSSELSENQQP) show a composition bias toward polar residues. Positions 243 to 255 (LHHHHKHKGQHRQ) are enriched in basic residues. Serine 266 carries the post-translational modification Phosphoserine. 2 non-standard amino acids (selenocysteine) are found at residues selenocysteine 318 and selenocysteine 330. Asparagine 338 carries an N-linked (GlcNAc...) asparagine glycan. 6 non-standard amino acids (selenocysteine) are found at residues selenocysteine 345, selenocysteine 352, selenocysteine 367, selenocysteine 369, selenocysteine 376, and selenocysteine 378. Residues 352–381 (UQISQQLIPTEASTSURUKNQAKKUEUPSN) are disordered. Residues 353 to 369 (QISQQLIPTEASTSURU) show a composition bias toward polar residues.

Belongs to the selenoprotein P family. Phosphorylation sites are present in the extracellular medium.

It is found in the secreted. Functionally, might be responsible for some of the extracellular antioxidant defense properties of selenium or might be involved in the transport of selenium. May supply selenium to tissues such as brain and testis. In Pongo abelii (Sumatran orangutan), this protein is Selenoprotein P.